We begin with the raw amino-acid sequence, 145 residues long: uncharacterized protein (145 aa).

This is an uncharacterized protein from Frog virus 3 (isolate Goorha) (FV-3).